Reading from the N-terminus, the 84-residue chain is Elongation factor 1-beta (84 aa).

It belongs to the EF-1-beta/EF-1-delta family.

In terms of biological role, promotes the exchange of GDP for GTP in EF-1-alpha/GDP, thus allowing the regeneration of EF-1-alpha/GTP that could then be used to form the ternary complex EF-1-alpha/GTP/AAtRNA. This Methanoculleus marisnigri (strain ATCC 35101 / DSM 1498 / JR1) protein is Elongation factor 1-beta.